A 112-amino-acid polypeptide reads, in one-letter code: Large ribosomal subunit protein uL22 (112 aa).

This sequence belongs to the universal ribosomal protein uL22 family. In terms of assembly, part of the 50S ribosomal subunit.

Functionally, this protein binds specifically to 23S rRNA; its binding is stimulated by other ribosomal proteins, e.g. L4, L17, and L20. It is important during the early stages of 50S assembly. It makes multiple contacts with different domains of the 23S rRNA in the assembled 50S subunit and ribosome. The globular domain of the protein is located near the polypeptide exit tunnel on the outside of the subunit, while an extended beta-hairpin is found that lines the wall of the exit tunnel in the center of the 70S ribosome. This chain is Large ribosomal subunit protein uL22, found in Nitratidesulfovibrio vulgaris (strain ATCC 29579 / DSM 644 / CCUG 34227 / NCIMB 8303 / VKM B-1760 / Hildenborough) (Desulfovibrio vulgaris).